The primary structure comprises 391 residues: ATP phosphoribosyltransferase regulatory subunit (391 aa).

The protein belongs to the class-II aminoacyl-tRNA synthetase family. HisZ subfamily. As to quaternary structure, heteromultimer composed of HisG and HisZ subunits.

It localises to the cytoplasm. The protein operates within amino-acid biosynthesis; L-histidine biosynthesis; L-histidine from 5-phospho-alpha-D-ribose 1-diphosphate: step 1/9. Functionally, required for the first step of histidine biosynthesis. May allow the feedback regulation of ATP phosphoribosyltransferase activity by histidine. The polypeptide is ATP phosphoribosyltransferase regulatory subunit (Prochlorococcus marinus (strain NATL1A)).